Reading from the N-terminus, the 96-residue chain is Large ribosomal subunit protein eL14 (96 aa).

It belongs to the eukaryotic ribosomal protein eL14 family.

This Saccharolobus islandicus (strain Y.N.15.51 / Yellowstone #2) (Sulfolobus islandicus) protein is Large ribosomal subunit protein eL14.